The chain runs to 421 residues: MDKIVVKGGKKLKGEVNINTAKNSVLPIIAGSILATDGVLINELPMLQDVFTICNVMEQLGYDLKIDKKENKLIVPPLNKDPLIPSEDLVKKMRASFLIMGPMIAKYGEFKLARPGGCNIGSRPIELHLKGLRALGAEDSNCGNGFVCIKAKKLTGSKIYLDFPSVGATENIMMAATMAKGTTVIENAAQEPEITDLINFLNSMGAKIYIEKPGKIIIEGVDSLTSTEYTPIYDRIEAGTFMVAAAITGSEIKINGVNKDHCSAIISKLKEAGTEFFDIHNDENSIIVKGNEEIKPINIKTMPYPGYPTDMQSQMMSLLSIAKGSSIITESVFENRFMNVDELRRMGANIQVEGRTALIEGVDNLTGCEVKATDLRAGAALILAGLVAKGETIVTDIYHIDRGYVEIENKFRALGADISRI.

22–23 (KN) is a binding site for phosphoenolpyruvate. UDP-N-acetyl-alpha-D-glucosamine is bound at residue Arg94. Cys118 (proton donor) is an active-site residue. At Cys118 the chain carries 2-(S-cysteinyl)pyruvic acid O-phosphothioketal. Residues 123-127 (RPIEL), Asp310, and Val332 contribute to the UDP-N-acetyl-alpha-D-glucosamine site.

It belongs to the EPSP synthase family. MurA subfamily.

Its subcellular location is the cytoplasm. It carries out the reaction phosphoenolpyruvate + UDP-N-acetyl-alpha-D-glucosamine = UDP-N-acetyl-3-O-(1-carboxyvinyl)-alpha-D-glucosamine + phosphate. It participates in cell wall biogenesis; peptidoglycan biosynthesis. Cell wall formation. Adds enolpyruvyl to UDP-N-acetylglucosamine. The sequence is that of UDP-N-acetylglucosamine 1-carboxyvinyltransferase 1 from Clostridium perfringens (strain 13 / Type A).